We begin with the raw amino-acid sequence, 416 residues long: Probable protein phosphatase 2C 75 (416 aa).

Disordered stretches follow at residues 1–20 (MTEIYRTISTGRGDDVSPTK) and 32–51 (RRQAAVFGEPSSSRNRDRTD). The PPM-type phosphatase domain maps to 108–411 (LYGIVSVMGR…DNISVVVIDL (304 aa)). 4 residues coordinate Mn(2+): Asp149, Gly150, Asp337, and Asp402.

This sequence belongs to the PP2C family. Mg(2+) is required as a cofactor. It depends on Mn(2+) as a cofactor.

It catalyses the reaction O-phospho-L-seryl-[protein] + H2O = L-seryl-[protein] + phosphate. The catalysed reaction is O-phospho-L-threonyl-[protein] + H2O = L-threonyl-[protein] + phosphate. Negative regulator of abscisic acid (ABA) responses during seed germination. The chain is Probable protein phosphatase 2C 75 (AHG1) from Arabidopsis thaliana (Mouse-ear cress).